We begin with the raw amino-acid sequence, 256 residues long: ATP synthase peripheral stalk subunit b, mitochondrial (256 aa).

Residues 1–42 constitute a mitochondrion transit peptide; the sequence is MLSRVVLSAAATAAPCLKNAAVLGPGVLQATRVFHTGQPRLA. An N6-succinyllysine modification is found at Lys-131. N6-acetyllysine is present on residues Lys-139, Lys-154, Lys-162, Lys-221, Lys-233, and Lys-244.

The protein belongs to the eukaryotic ATPase B chain family. As to quaternary structure, component of the ATP synthase complex composed at least of ATP5F1A/subunit alpha, ATP5F1B/subunit beta, ATP5MC1/subunit c (homooctomer), MT-ATP6/subunit a, MT-ATP8/subunit 8, ATP5ME/subunit e, ATP5MF/subunit f, ATP5MG/subunit g, ATP5MK/subunit k, ATP5MJ/subunit j, ATP5F1C/subunit gamma, ATP5F1D/subunit delta, ATP5F1E/subunit epsilon, ATP5PF/subunit F6, ATP5PB/subunit b, ATP5PD/subunit d, ATP5PO/subunit OSCP. ATP synthase complex consists of a soluble F(1) head domain (subunits alpha(3) and beta(3)) - the catalytic core - and a membrane F(0) domain - the membrane proton channel (subunits c, a, 8, e, f, g, k and j). These two domains are linked by a central stalk (subunits gamma, delta, and epsilon) rotating inside the F1 region and a stationary peripheral stalk (subunits F6, b, d, and OSCP).

It localises to the mitochondrion. Its subcellular location is the mitochondrion inner membrane. Functionally, subunit b, of the mitochondrial membrane ATP synthase complex (F(1)F(0) ATP synthase or Complex V) that produces ATP from ADP in the presence of a proton gradient across the membrane which is generated by electron transport complexes of the respiratory chain. ATP synthase complex consist of a soluble F(1) head domain - the catalytic core - and a membrane F(1) domain - the membrane proton channel. These two domains are linked by a central stalk rotating inside the F(1) region and a stationary peripheral stalk. During catalysis, ATP synthesis in the catalytic domain of F(1) is coupled via a rotary mechanism of the central stalk subunits to proton translocation. In vivo, can only synthesize ATP although its ATP hydrolase activity can be activated artificially in vitro. Part of the complex F(0) domain. Part of the complex F(0) domain and the peripheric stalk, which acts as a stator to hold the catalytic alpha(3)beta(3) subcomplex and subunit a/ATP6 static relative to the rotary elements. The protein is ATP synthase peripheral stalk subunit b, mitochondrial of Rattus norvegicus (Rat).